A 408-amino-acid polypeptide reads, in one-letter code: Aminomethyltransferase, mitochondrial (408 aa).

The transit peptide at 1–30 (MRGGLWQLGQSITRRLANGGDKKAVARRCF) directs the protein to the mitochondrion. Positions 235, 266, and 404 each coordinate substrate.

Belongs to the GcvT family. As to quaternary structure, the glycine cleavage system is composed of four proteins: P, T, L and H.

It localises to the mitochondrion. It carries out the reaction N(6)-[(R)-S(8)-aminomethyldihydrolipoyl]-L-lysyl-[protein] + (6S)-5,6,7,8-tetrahydrofolate = N(6)-[(R)-dihydrolipoyl]-L-lysyl-[protein] + (6R)-5,10-methylene-5,6,7,8-tetrahydrofolate + NH4(+). In terms of biological role, the glycine cleavage system catalyzes the degradation of glycine. The sequence is that of Aminomethyltransferase, mitochondrial (GDCST) from Pisum sativum (Garden pea).